The primary structure comprises 261 residues: uncharacterized protein (261 aa).

The next 2 membrane-spanning stretches (helical) occupy residues 4-21 (RLIA…LIVL) and 33-55 (FSIL…LVLF).

The protein localises to the cell membrane. This is an uncharacterized protein from Archaeoglobus fulgidus (strain ATCC 49558 / DSM 4304 / JCM 9628 / NBRC 100126 / VC-16).